The chain runs to 682 residues: Protein ACTIVITY OF BC1 COMPLEX KINASE 1, chloroplastic (682 aa).

A chloroplast-targeting transit peptide spans 1-79 (MESIHCNSLL…NSTDASVMTT (79 aa)). Residues 236-567 (KISSQTIAAA…IQVLFKDGVF (332 aa)) enclose the Protein kinase domain. ATP is bound by residues 242 to 250 (IAAASLGQV) and lysine 265. Residue aspartate 400 is the Proton acceptor of the active site.

Belongs to the protein kinase superfamily. ADCK protein kinase family. Interacts with ABC1K3 in plastoglobules (PG). As to expression, expressed in all tissues (e.g. especially in leaves) at all developmental stages from seed germination to flowering, except in the root tips.

It localises to the plastid. The protein resides in the chloroplast. It is found in the plastoglobule. The enzyme catalyses L-seryl-[protein] + ATP = O-phospho-L-seryl-[protein] + ADP + H(+). It catalyses the reaction L-threonyl-[protein] + ATP = O-phospho-L-threonyl-[protein] + ADP + H(+). In terms of biological role, kinase that can phosphorylate the tocopherol cyclase VTE1, a key enzyme of tocopherol (vitamin E) metabolism and involved in the recycling of oxidated alpha-tocopherol quinone, possibly stabilizing it at plastoglobules. Also regulates plastoglobule protein composition. Prevents photodamage of chloroplasts under continuous red light, thus working in opposition to ABC1K3. Together with ABC1K1, contributes to plastoglobule (PG) function in prenyl-lipid metabolism, stress response, and thylakoid remodeling. Involved in chlorophyll degradation and in the maintenance of the number of chlorophyll-binding photosynthetic thylakoid membranes. Ensures photosynthetic electron transport by regulating the homeostasis of plastoquinone, beta-carotene and xanthophyll lutein, as well as membrane antioxidant tocopherol metabolism. Seems to affect specifically stability or turnover of D1 protein, product of psbA, one of the four core subunits of the photosystem II (PSII). Required for photooxidative stress responses, including the induction of oxidative stress response genes (e.g. FSD1, CSD1, CAT1, and UTG71C1), to prevent photosystem II core and chlorophyll degradations. The sequence is that of Protein ACTIVITY OF BC1 COMPLEX KINASE 1, chloroplastic from Arabidopsis thaliana (Mouse-ear cress).